We begin with the raw amino-acid sequence, 198 residues long: Nucleoid occlusion factor SlmA (198 aa).

The region spanning 10 to 70 is the HTH tetR-type domain; that stretch reads NRREEILQSL…SLIEFIEDSL (61 aa). The segment at residues 33-52 is a DNA-binding region (H-T-H motif); sequence TTAKLAASVGVSEAALYRHF. A coiled-coil region spans residues 117–144; that stretch reads EQDRLQGRINQLFERIEAQLRQVLREKR.

The protein belongs to the nucleoid occlusion factor SlmA family. Homodimer. Interacts with FtsZ.

The protein resides in the cytoplasm. Its subcellular location is the nucleoid. Required for nucleoid occlusion (NO) phenomenon, which prevents Z-ring formation and cell division over the nucleoid. Acts as a DNA-associated cell division inhibitor that binds simultaneously chromosomal DNA and FtsZ, and disrupts the assembly of FtsZ polymers. SlmA-DNA-binding sequences (SBS) are dispersed on non-Ter regions of the chromosome, preventing FtsZ polymerization at these regions. This is Nucleoid occlusion factor SlmA from Salmonella typhi.